Here is a 386-residue protein sequence, read N- to C-terminus: NADH kinase pos5, mitochondrial (386 aa).

Residues 1 to 42 constitute a mitochondrion transit peptide; sequence MIRAANGFRISVRNTAVCLAPNFRQLKGFSIINLGSLQYFRY.

The protein belongs to the NAD kinase family.

It is found in the mitochondrion. The catalysed reaction is NADH + ATP = ADP + NADPH + H(+). In terms of biological role, phosphorylates both NADH and NAD(+), with a preference for NADH. Anti-oxidant factor and key source of the cellular reductant NADPH. The sequence is that of NADH kinase pos5, mitochondrial (pos5) from Schizosaccharomyces pombe (strain 972 / ATCC 24843) (Fission yeast).